A 325-amino-acid polypeptide reads, in one-letter code: Brain mitochondrial carrier protein 1 (325 aa).

6 helical membrane-spanning segments follow: residues 38–54 (GLNW…SIVA), 112–128 (LRQA…YQSL), 141–161 (LLIN…IANP), 199–215 (GVVP…GVEL), 240–256 (VSSF…SNPV), and 298–315 (GFWP…IFFI). Solcar repeat units follow at residues 42 to 131 (KPFV…LKRL), 139 to 224 (ETLL…TKKH), and 233 to 323 (DTIL…LKRL).

This sequence belongs to the mitochondrial carrier (TC 2.A.29) family. Homotetramer. As to expression, mainly expressed in brain. Some expression in testis and pituitary.

It localises to the mitochondrion inner membrane. The enzyme catalyses sulfite(in) + sulfate(out) = sulfite(out) + sulfate(in). It carries out the reaction thiosulfate(in) + sulfate(out) = thiosulfate(out) + sulfate(in). The catalysed reaction is sulfate(out) + phosphate(in) = sulfate(in) + phosphate(out). It catalyses the reaction oxalate(in) + sulfate(out) = oxalate(out) + sulfate(in). The enzyme catalyses malonate(in) + sulfate(out) = malonate(out) + sulfate(in). It carries out the reaction maleate(in) + sulfate(out) = maleate(out) + sulfate(in). The catalysed reaction is (S)-malate(in) + sulfate(out) = (S)-malate(out) + sulfate(in). It catalyses the reaction (3S)-citramalate(in) + sulfate(out) = (3S)-citramalate(out) + sulfate(in). The enzyme catalyses (3R)-citramalate(in) + sulfate(out) = (3R)-citramalate(out) + sulfate(in). It carries out the reaction sulfate(out) + succinate(in) = sulfate(in) + succinate(out). The catalysed reaction is (S,S)-tartrate(in) + sulfate(out) = (S,S)-tartrate(out) + sulfate(in). It catalyses the reaction (2R,3R)-tartrate(in) + sulfate(out) = (2R,3R)-tartrate(out) + sulfate(in). The enzyme catalyses D-aspartate(in) + sulfate(out) = D-aspartate(out) + sulfate(in). It carries out the reaction L-aspartate(in) + sulfate(out) = L-aspartate(out) + sulfate(in). The catalysed reaction is sulfate(in) = sulfate(out). It catalyses the reaction phosphate(in) = phosphate(out). The enzyme catalyses (S)-malate(out) = (S)-malate(in). It carries out the reaction citrate(in) = citrate(out). The catalysed reaction is L-aspartate(out) = L-aspartate(in). It catalyses the reaction L-glutamate(out) = L-glutamate(in). The enzyme catalyses H(+)(in) = H(+)(out). It carries out the reaction chloride(in) = chloride(out). With respect to regulation, increased activity at pH lower than 8.0. sulfate/sulfate exchange activity is inhibited strongly by pyridoxal 5'-phosphate, bathophenanthroline and the organic mercurials mersalyl, p-chloromercuribenzoate and HgCl2. Proton conductance is activated by cardiolipin and long-chain free fatty acids and inhibited by purine nucleotides ATP and ADP. Chloride ion transporter activity is inhibited by long-chain free fatty acids. In terms of biological role, transports inorganic anions (sulfate, sulfite, thiosulfate and phosphate) and, to a lesser extent, a variety of dicarboxylates (e.g. malonate, malate and citramalate) and, even more so, aspartate and glutamate and tricarboxylates. May catalyze the export of sulfite and thiosulfate (the hydrogen sulfide degradation products) from the mitochondria, thereby modulating the level of the hydrogen sulfide. Also can mediate a very low unidirectional transport of anions including sulfate, phosphate, (S)-malate, citrate, L-aspartate and L-glutamate. Maintains oxidative balance (through uncoupling activities) and ATP production (by modifying mitochondrial membrane potential). Is able to transport protons across lipid membranes. Also exhibits transmembrane chloride transport activity to a lesser extent. May modify mitochondrial respiratory efficiency and mitochondrial oxidant production. The polypeptide is Brain mitochondrial carrier protein 1 (Homo sapiens (Human)).